The following is a 550-amino-acid chain: Solute carrier family 22 member 11 (550 aa).

Residues 1-10 (MAFSKLLEQA) are Cytoplasmic-facing. A helical membrane pass occupies residues 11-31 (GGVGLFQTLQVLTFILPCLMI). Residues 32 to 142 (PSQMLLENFS…DLVCSSQGLK (111 aa)) lie on the Extracellular side of the membrane. Asn39, Asn56, and Asn99 each carry an N-linked (GlcNAc...) asparagine glycan. Residues 143–163 (PLSQSIFMSGILVGSFIWGLL) form a helical membrane-spanning segment. Residues 164 to 174 (SYRFGRKPMLS) are Cytoplasmic-facing. A helical membrane pass occupies residues 175 to 195 (WCCLQLAVAGTSTIFAPTFVI). Residues 196–200 (YCGLR) lie on the Extracellular side of the membrane. The helical transmembrane segment at 201-221 (FVAAFGMAGIFLSSLTLMVEW) threads the bilayer. Over 222 to 231 (TTTSRRAVTM) the chain is Cytoplasmic. The chain crosses the membrane as a helical span at residues 232-252 (TVVGCAFSAGQAALGGLAFAL). Residues 253–256 (RDWR) lie on the Extracellular side of the membrane. Residues 257–277 (TLQLAASVPFFAISLISWWLP) traverse the membrane as a helical segment. The Cytoplasmic segment spans residues 278-346 (ESARWLIIKG…FCVPVLRWRS (69 aa)). Residues 347–367 (CAMLVVNFSLLISYYGLVFDL) traverse the membrane as a helical segment. At 368-378 (QSLGRDIFLLQ) the chain is on the extracellular side. Residues 379 to 399 (ALFGAVDFLGRATTALLLSFL) form a helical membrane-spanning segment. The Cytoplasmic portion of the chain corresponds to 400–402 (GRR). The chain crosses the membrane as a helical span at residues 403–423 (TIQAGSQAMAGLAILANMLVP). Residues 424–430 (QDLQTLR) lie on the Extracellular side of the membrane. The chain crosses the membrane as a helical span at residues 431 to 451 (VVFAVLGKGCFGISLTCLTIY). Residues 452–463 (KAELFPTPVRMT) lie on the Cytoplasmic side of the membrane. The helical transmembrane segment at 464–484 (ADGILHTVGRLGAMMGPLILM) threads the bilayer. Residues 485 to 490 (SRQALP) lie on the Extracellular side of the membrane. A helical transmembrane segment spans residues 491–511 (LLPPLLYGVISIASSLVVLFF). Topologically, residues 512–550 (LPETQGLPLPDTIQDLESQKSTAAQGNRQEAVTVESTSL) are cytoplasmic. Residues 531–550 (KSTAAQGNRQEAVTVESTSL) are disordered.

Belongs to the major facilitator (TC 2.A.1) superfamily. Organic cation transporter (TC 2.A.1.19) family. In terms of processing, N-glycosylated. Contains several complex-type N-glycans. Expressed in placental trophoblasts, syncytiotrophoblast and cytotrophoblast. Also located in the proximal tubules in kidneys.

It localises to the cell membrane. It is found in the apical cell membrane. The protein localises to the basal cell membrane. The catalysed reaction is estrone 3-sulfate(out) + glutarate(in) = estrone 3-sulfate(in) + glutarate(out). The enzyme catalyses dehydroepiandrosterone 3-sulfate(out) = dehydroepiandrosterone 3-sulfate(in). It carries out the reaction prostaglandin F2alpha(out) = prostaglandin F2alpha(in). It catalyses the reaction prostaglandin E2(out) = prostaglandin E2(in). Antiporter that mediates the transport of conjugated steroids and other specific organic anions at the basal membrane of syncytiotrophoblast and at the apical membrane of proximal tubule epithelial cells, in exchange for anionic compounds. May be responsible for placental absorption of fetal-derived steroid sulfates such as estrone sulfate (E1S) and the steroid hormone precursor dehydroepiandrosterone sulfate (DHEA-S), as well as clearing waste products and xenobiotics from the fetus. Maybe also be involved in placental urate homeostasis. Facilitates the renal reabsorption of organic anions such as urate and derived steroid sulfates. Organic anion glutarate acts as conteranion for E1S renal uptake. Possible transport mode may also include DHEA-S/E1S exchange. Also interacts with inorganic anions such as chloride and hydroxyl ions, therefore possible transport modes may include E1S/Cl(-), E1S/OH(-), urate/Cl(-) and urate/OH(-). Also mediates the transport of prostaglandin E2 (PGE2) and prostaglandin F2-alpha (PGF2-alpha) and may be involved in their renal excretion. Also able to uptake anionic drugs, diuretics, bile salts and ochratoxin A. Mediates the unidirectional efflux of glutamate and aspartate. Glutamate efflux down its transmembrane gradient may drive SLC22A11/OAT4-mediated placental uptake of E1S. The sequence is that of Solute carrier family 22 member 11 from Homo sapiens (Human).